The following is a 249-amino-acid chain: Triosephosphate isomerase (249 aa).

N8–K10 is a substrate binding site. The Electrophile role is filled by H95. Catalysis depends on E163, which acts as the Proton acceptor. Substrate-binding residues include G169 and S209.

Belongs to the triosephosphate isomerase family. Homodimer.

It localises to the cytoplasm. The enzyme catalyses D-glyceraldehyde 3-phosphate = dihydroxyacetone phosphate. It participates in carbohydrate biosynthesis; gluconeogenesis. Its pathway is carbohydrate degradation; glycolysis; D-glyceraldehyde 3-phosphate from glycerone phosphate: step 1/1. Functionally, involved in the gluconeogenesis. Catalyzes stereospecifically the conversion of dihydroxyacetone phosphate (DHAP) to D-glyceraldehyde-3-phosphate (G3P). The chain is Triosephosphate isomerase from Orientia tsutsugamushi (strain Boryong) (Rickettsia tsutsugamushi).